The following is a 254-amino-acid chain: Large ribosomal subunit protein uL2 (254 aa).

Belongs to the universal ribosomal protein uL2 family.

This Eremothecium gossypii (strain ATCC 10895 / CBS 109.51 / FGSC 9923 / NRRL Y-1056) (Yeast) protein is Large ribosomal subunit protein uL2 (RPL2).